The sequence spans 599 residues: Nucleosomal histone kinase 1 (599 aa).

Residues 47-328 (WRIGPSIGVG…PDYDKCRSWF (282 aa)) form the Protein kinase domain. ATP is bound by residues 53–61 (IGVGGFGEI) and Lys77. The Proton acceptor role is filled by Asp183. 2 disordered regions span residues 340–507 (NGDL…PQPR) and 532–599 (RKKK…KYQG). Positions 349-361 (PQTSSNNNLSPPG) are enriched in polar residues. Ser376, Ser381, Ser382, Ser388, and Ser390 each carry phosphoserine. Positions 435-448 (VKTEPKSTPRERAT) are enriched in basic and acidic residues. Position 483 is a phosphoserine (Ser483). The span at 546-558 (SRTPSSRSALASS) shows a compositional bias: low complexity. Ser564 and Ser586 each carry phosphoserine. Position 589 is a phosphothreonine (Thr589).

It belongs to the protein kinase superfamily. CK1 Ser/Thr protein kinase family. VRK subfamily. In terms of assembly, may interact with Unc-89 (via protein kinase domain 1). Interacts with L(2)gl. Requires Mg(2+) as cofactor. In terms of processing, phosphorylated during mitosis and female meiosis. As to expression, expressed in ovaries (at protein level). Expressed in indirect flight muscle (IFM) (at protein level).

Its subcellular location is the cytoplasm. The protein localises to the nucleus. It localises to the chromosome. The protein resides in the myofibril. It is found in the sarcomere. Its subcellular location is the z line. The protein localises to the m line. It catalyses the reaction L-seryl-[protein] + ATP = O-phospho-L-seryl-[protein] + ADP + H(+). The enzyme catalyses L-threonyl-[protein] + ATP = O-phospho-L-threonyl-[protein] + ADP + H(+). Its function is as follows. Serine/threonine-protein kinase involved in somatic mitosis and female meiosis. Required for spindle organization in mitosis, and for the establishment or maintenance of meiosis-specific chromosomal configurations, including the prophase I karyosome and the metaphase I spindle. Specifically phosphorylates nucleosomal H2A on 'Thr-119'. Required for the development and organization of indirect flight muscle sarcomeres by regulating the formation of M line and H zone and the correct assembly of thick and thin filaments in the sarcomere. In Drosophila melanogaster (Fruit fly), this protein is Nucleosomal histone kinase 1 (ball).